The following is a 391-amino-acid chain: Phosphoglycerate kinase (391 aa).

Substrate is bound by residues 21-23 (DFN), R36, 59-62 (HLGR), R113, and R146. Residues K197, E319, and 345 to 348 (GGDT) each bind ATP.

Belongs to the phosphoglycerate kinase family. In terms of assembly, monomer.

It is found in the cytoplasm. It catalyses the reaction (2R)-3-phosphoglycerate + ATP = (2R)-3-phospho-glyceroyl phosphate + ADP. It functions in the pathway carbohydrate degradation; glycolysis; pyruvate from D-glyceraldehyde 3-phosphate: step 2/5. The chain is Phosphoglycerate kinase from Methylococcus capsulatus (strain ATCC 33009 / NCIMB 11132 / Bath).